A 592-amino-acid chain; its full sequence is MYLNACRALTLISVLSLLACNSEPEKKQATPSKEIAKAQTGSWGDQGDGTYINPILNADYPDSDIEQVGDTYYMITSKQHMSPGMPILESKDMVNWTNVGHVFNSLSWAPEYNWDRMNGYSFGTWAGDLAYHEGTWYCYQIDYQHGLMVATSKDIKGPWSKPIMMLPKSEVLDDPAVFWDEDTHKAYIIINTAGKQKEASNTIEGNENRIYEMSWDGTKILDEGKLVYTGMGAEAAKIYKIDGTWYIFLAQWTMGDMSTKPGVKNPKNDRKQIVLRSKESIYGPYEVKTVLEKGTVFNNRSASQGALMQAPDNSWWYMHQLIQNDDIPFQGRPQCLEPVTWVDGWPIIGVDEDNDGIGEPVKTYKKPIDGYPVTAPRTDDDFSSPKLGFQWEWNHNPRNTHWSLTERPGWLRLKASKVLPNEKGYGPNINEWTNNDGSDSDFWRANNTLSQRIMGITTGTAVAKFDVSGMKPHQLAGFVRYGGVFNLLGVEVDEHGKKHLFYMEPMGEKTVGPEITVNDLYIRTSNRSNQAIYEYSFDGKNFKRFGPTFTIAFGKWTGDRLGLFSWNDKEDAGYIDVDWFTYDYDGPKAANQ.

The N-terminal stretch at 1–19 (MYLNACRALTLISVLSLLA) is a signal peptide. Residue C20 is the site of N-palmitoyl cysteine attachment. The S-diacylglycerol cysteine moiety is linked to residue C20.

This sequence belongs to the glycosyl hydrolase 43 family.

It localises to the cell outer membrane. Its function is as follows. Xylosidase involved in ulvan degradation. Ulvan is the main polysaccharide component of the Ulvales (green seaweed) cell wall. It is composed of disaccharide building blocks comprising 3-sulfated rhamnose (Rha3S) linked to D-glucuronic acid (GlcA), L-iduronic acid (IduA), or D-xylose (Xyl). Beta-xylosidase converts Xyl-Rha3S, a product of alpha-L-rhamnosidase acting on Rha-Xyl-Rha3S oligosaccharides, further to Xyl and Rha3S. The sequence is that of Beta-xylosidase from Formosa agariphila (strain DSM 15362 / KCTC 12365 / LMG 23005 / KMM 3901 / M-2Alg 35-1).